Consider the following 218-residue polypeptide: Adenylate kinase (218 aa).

Residue 10 to 15 coordinates ATP; that stretch reads GAGKGT. The NMP stretch occupies residues 30-59; sequence STGDMLRAAIQAQTPLGLEAKKVMDDGKLV. AMP is bound by residues T31, R36, 57 to 59, 85 to 88, and Q92; these read KLV and GFPR. Positions 122-159 are LID; sequence GRRVHLASGRTYHVIFNPPKKEGVDDITGEPLIQREDD. ATP is bound by residues R123 and 132–133; that span reads TY. 2 residues coordinate AMP: R156 and R167. G203 provides a ligand contact to ATP.

Belongs to the adenylate kinase family. In terms of assembly, monomer.

The protein localises to the cytoplasm. It carries out the reaction AMP + ATP = 2 ADP. The protein operates within purine metabolism; AMP biosynthesis via salvage pathway; AMP from ADP: step 1/1. In terms of biological role, catalyzes the reversible transfer of the terminal phosphate group between ATP and AMP. Plays an important role in cellular energy homeostasis and in adenine nucleotide metabolism. The protein is Adenylate kinase of Prosthecochloris aestuarii (strain DSM 271 / SK 413).